The primary structure comprises 482 residues: tRNA-2-methylthio-N(6)-dimethylallyladenosine synthase (482 aa).

One can recognise an MTTase N-terminal domain in the interval 3-120; that stretch reads KKLHIKTWGC…LPEMIKQVQG (118 aa). Residues Cys-12, Cys-49, Cys-83, Cys-158, Cys-162, and Cys-165 each contribute to the [4Fe-4S] cluster site. One can recognise a Radical SAM core domain in the interval 144–376; that stretch reads KADGPSAFVS…QNRITQMAQQ (233 aa). Positions 379–442 constitute a TRAM domain; sequence RQMFDTEQRI…PNSLRGDLIR (64 aa).

This sequence belongs to the methylthiotransferase family. MiaB subfamily. As to quaternary structure, monomer. The cofactor is [4Fe-4S] cluster.

Its subcellular location is the cytoplasm. It catalyses the reaction N(6)-dimethylallyladenosine(37) in tRNA + (sulfur carrier)-SH + AH2 + 2 S-adenosyl-L-methionine = 2-methylsulfanyl-N(6)-dimethylallyladenosine(37) in tRNA + (sulfur carrier)-H + 5'-deoxyadenosine + L-methionine + A + S-adenosyl-L-homocysteine + 2 H(+). Its function is as follows. Catalyzes the methylthiolation of N6-(dimethylallyl)adenosine (i(6)A), leading to the formation of 2-methylthio-N6-(dimethylallyl)adenosine (ms(2)i(6)A) at position 37 in tRNAs that read codons beginning with uridine. This is tRNA-2-methylthio-N(6)-dimethylallyladenosine synthase from Pseudoalteromonas translucida (strain TAC 125).